The sequence spans 432 residues: Neuronal pentraxin-1 (432 aa).

An N-terminal signal peptide occupies residues 1–22 (MLAGRAARTCALLALCLLGSRA). Positions 90 to 128 (ESQSTLDAGPGEARSGGGRKQPGSGKNTMGDLSRTPASE) are disordered. Residues Asn154 and Asn193 are each glycosylated (N-linked (GlcNAc...) asparagine). Positions 226 to 428 (DKFQLTFPLR…GATKWTFEAC (203 aa)) constitute a Pentraxin (PTX) domain. A disulfide bridge links Cys256 with Cys316. Residues Asn280, Glu358, Gln359, Asp360, and Gln370 each coordinate Ca(2+).

As to quaternary structure, homooligomer or heterooligomer (probably pentamer) with neuronal pentraxin receptor (NPTXR). Ca(2+) serves as cofactor. Post-translationally, glycosylated. In terms of tissue distribution, cerebellum, hippocampus and cerebral cortex.

The protein resides in the secreted. The protein localises to the cytoplasmic vesicle. It is found in the secretory vesicle. Its subcellular location is the endoplasmic reticulum. In terms of biological role, may be involved in mediating uptake of synaptic material during synapse remodeling or in mediating the synaptic clustering of AMPA glutamate receptors at a subset of excitatory synapses. The polypeptide is Neuronal pentraxin-1 (Nptx1) (Rattus norvegicus (Rat)).